The primary structure comprises 291 residues: Ribosomal RNA small subunit methyltransferase H (291 aa).

Residues 31 to 33 (GGY), D49, F76, D97, and Q104 each bind S-adenosyl-L-methionine.

The protein belongs to the methyltransferase superfamily. RsmH family.

It is found in the cytoplasm. It carries out the reaction cytidine(1402) in 16S rRNA + S-adenosyl-L-methionine = N(4)-methylcytidine(1402) in 16S rRNA + S-adenosyl-L-homocysteine + H(+). Its function is as follows. Specifically methylates the N4 position of cytidine in position 1402 (C1402) of 16S rRNA. The polypeptide is Ribosomal RNA small subunit methyltransferase H (Anaplasma marginale (strain St. Maries)).